Reading from the N-terminus, the 425-residue chain is Septin-11 (425 aa).

Ala-2 bears the N-acetylalanine mark. Ser-9 is modified (phosphoserine). The Septin-type G domain maps to Gln-38–Glu-304. The G1 motif stretch occupies residues Gly-48 to Ser-55. Residues Gly-48–Ser-55, Gly-103, Lys-184–Glu-192, Gly-238, and Arg-253 each bind GTP. The interval Asp-100 to Gly-103 is G3 motif. Residues Ala-183 to Asp-186 form a G4 motif region. A coiled-coil region spans residues Gln-320–Gln-410. Residues Lys-399–Asn-425 form a disordered region. The segment covering Ala-401 to Gln-416 has biased composition (low complexity).

It belongs to the TRAFAC class TrmE-Era-EngA-EngB-Septin-like GTPase superfamily. Septin GTPase family. Septins polymerize into heterooligomeric protein complexes that form filaments, and can associate with cellular membranes, actin filaments and microtubules. Forms homooligomers. GTPase activity is required for filament formation. Interacts with SEPTIN7, SEPTIN9 and SEPTIN12.

The protein localises to the cytoplasm. Its subcellular location is the cytoskeleton. It is found in the synapse. It localises to the cell projection. The protein resides in the dendritic spine. The protein localises to the axon. Its function is as follows. Filament-forming cytoskeletal GTPase. May play a role in cytokinesis (Potential). May play a role in the cytoarchitecture of neurons, including dendritic arborization and dendritic spines, and in GABAergic synaptic connectivity. This chain is Septin-11, found in Bos taurus (Bovine).